Consider the following 519-residue polypeptide: Galactan beta-1,4-galactosyltransferase GALS2 (519 aa).

The helical transmembrane segment at 28 to 48 (LALMALLVLCTLATLLPFLPS) threads the bilayer. A GT92 domain is found at 257–471 (DYLYCGSSLY…YHGSISQRRE (215 aa)).

The protein belongs to the glycosyltransferase 92 family. As to expression, expressed in the midrib of mature leaves, root vasculature, flower filaments, siliques and seeds.

It localises to the golgi apparatus membrane. In terms of biological role, involved in the biosynthesis of beta-1,4-galactan. Beta-1,4-galactans are abundant polysaccharides in plant cell walls and are found as side-chain of rhamnogalacturonan I, which is a major component of pectin. The sequence is that of Galactan beta-1,4-galactosyltransferase GALS2 from Arabidopsis thaliana (Mouse-ear cress).